The chain runs to 209 residues: Potassium-transporting ATPase KdpC subunit (209 aa).

A helical transmembrane segment spans residues 11–31 (MILALTVLTGLAYPLAVTAVA). The segment at 188-209 (AQAPTPRQPEPGHPEPGRPEVR) is disordered. A compositionally biased stretch (basic and acidic residues) spans 197–209 (EPGHPEPGRPEVR).

The protein belongs to the KdpC family. The system is composed of three essential subunits: KdpA, KdpB and KdpC.

The protein resides in the cell inner membrane. Its function is as follows. Part of the high-affinity ATP-driven potassium transport (or Kdp) system, which catalyzes the hydrolysis of ATP coupled with the electrogenic transport of potassium into the cytoplasm. This subunit acts as a catalytic chaperone that increases the ATP-binding affinity of the ATP-hydrolyzing subunit KdpB by the formation of a transient KdpB/KdpC/ATP ternary complex. The polypeptide is Potassium-transporting ATPase KdpC subunit (Rhodospirillum centenum (strain ATCC 51521 / SW)).